The primary structure comprises 626 residues: Mitogen-activated protein kinase kinase kinase 3 (626 aa).

One can recognise a PB1 domain in the interval 44-123 (DVRIKFEHNG…KSLRILLLSQ (80 aa)). Disordered stretches follow at residues 125 to 184 (RNHT…YVPE) and 218 to 273 (SSAE…VKGG). Composition is skewed to polar residues over residues 128-137 (TSSSPHSGVS), 144-155 (PSQSAGDINTIY), 165-174 (LSVSSQNPGR), and 219-247 (SAEN…QMSR). Phosphoserine occurs at positions 147 and 166. Phosphoserine occurs at positions 250 and 312. The span at 250 to 270 (SFPDNRKECSDRETQLYDKGV) shows a compositional bias: basic and acidic residues. Serine 337 carries the post-translational modification Phosphoserine; by SGK1. At serine 340 the chain carries Phosphoserine. The region spanning 362-622 (WRRGKLLGQG…AEELLTHHFA (261 aa)) is the Protein kinase domain. ATP is bound by residues 368–376 (LGQGAFGRV) and lysine 391. Aspartate 489 serves as the catalytic Proton acceptor.

It belongs to the protein kinase superfamily. STE Ser/Thr protein kinase family. MAP kinase kinase kinase subfamily. Binds both upstream activators and downstream substrates in multimolecular complexes. Part of a complex with MAP2K3, RAC1 and CCM2. Interacts with MAP2K5 and SPAG9. The cofactor is Mg(2+). In terms of processing, phosphorylation at Ser-166 and Ser-337 by SGK1 inhibits its activity.

The catalysed reaction is L-seryl-[protein] + ATP = O-phospho-L-seryl-[protein] + ADP + H(+). It catalyses the reaction L-threonyl-[protein] + ATP = O-phospho-L-threonyl-[protein] + ADP + H(+). Activated by phosphorylation on Thr-530. Component of a protein kinase signal transduction cascade. Mediates activation of the NF-kappa-B, AP1 and DDIT3 transcriptional regulators. This is Mitogen-activated protein kinase kinase kinase 3 (Map3k3) from Mus musculus (Mouse).